We begin with the raw amino-acid sequence, 397 residues long: F-box protein At3g49450 (397 aa).

One can recognise an F-box domain in the interval 26 to 75 (GENSGTLPTDLMVEILSRVPAKSAARFRCVSNDWNSLLRSPYLTNLFLKR).

This Arabidopsis thaliana (Mouse-ear cress) protein is F-box protein At3g49450.